The primary structure comprises 954 residues: Valine--tRNA ligase (954 aa).

The 'HIGH' region signature appears at 48 to 58 (PNVTGSLHMGH). Positions 560 to 564 (KMSKS) match the 'KMSKS' region motif. Residue K563 participates in ATP binding. Residues 883 to 954 (AGFINKEAEL…QTQYQAIENL (72 aa)) adopt a coiled-coil conformation.

This sequence belongs to the class-I aminoacyl-tRNA synthetase family. ValS type 1 subfamily. Monomer.

The protein resides in the cytoplasm. It carries out the reaction tRNA(Val) + L-valine + ATP = L-valyl-tRNA(Val) + AMP + diphosphate. Functionally, catalyzes the attachment of valine to tRNA(Val). As ValRS can inadvertently accommodate and process structurally similar amino acids such as threonine, to avoid such errors, it has a 'posttransfer' editing activity that hydrolyzes mischarged Thr-tRNA(Val) in a tRNA-dependent manner. The polypeptide is Valine--tRNA ligase (Actinobacillus pleuropneumoniae serotype 3 (strain JL03)).